Consider the following 98-residue polypeptide: MRTLTLLTALLLLALQVQTQSLEETADQVPAQDQPGAEAQDITISFAGDERSAREASKSLIGTASCTCRRAWICRWGERHSGKCIDQKGSTYRLCCRR.

The first 19 residues, 1-19 (MRTLTLLTALLLLALQVQT), serve as a signal peptide directing secretion. The propeptide occupies 20-63 (QSLEETADQVPAQDQPGAEAQDITISFAGDERSAREASKSLIGT). Cystine bridges form between Cys66/Cys96, Cys68/Cys84, and Cys74/Cys95.

Belongs to the alpha-defensin family. As to expression, paneth cells of the small bowel.

It is found in the secreted. Functionally, has broad-spectrum antimicrobial properties. The antimicrobial activity decreases in the present of salt in vitro. Binds anionic phospholipids, which leads to the aggregation of liposomes in vitro. Membrane permeabilization of the target cells is an essential part of the peptide's mode of antimicrobial activity. No hemolytic activity against sheep or horse erythrocytes. Has antibacterial activity against the bacterial horse pathogens Gram-positive R.equi ATCC 33701 P(-) (minimum bactericidal concentration or MBC=5 ug/ml) and R.equi ATCC 33701 P(+) (MBC=5 ug/ml), which are resistant against beta-lactam antibiotics. Also has antibacterial activity against highly infectious wild-type strain R.equi 85F P(+) (MBC=5 ug/ml), S.equi subsp. equi (MBC=5 ug/ml), S.equi subsp. zooepidemicus (MBC=5 ug/ml), S.dysgalactiae subsp. equisimilis (MBC=10 ug/ml), S.choleraesuis subsp. choleraesuis serovar Typhimurium (MBC=10 ug/ml), and P.multocida subsp. multocida (MBC=&gt;10 ug/ml). Probably contributes to the antimicrobial barrier function of the small bowel mucosa. The protein is Alpha-defensin 1 of Equus caballus (Horse).